A 98-amino-acid polypeptide reads, in one-letter code: Co-chaperonin GroES (98 aa).

The protein belongs to the GroES chaperonin family. As to quaternary structure, heptamer of 7 subunits arranged in a ring. Interacts with the chaperonin GroEL.

It is found in the cytoplasm. Functionally, together with the chaperonin GroEL, plays an essential role in assisting protein folding. The GroEL-GroES system forms a nano-cage that allows encapsulation of the non-native substrate proteins and provides a physical environment optimized to promote and accelerate protein folding. GroES binds to the apical surface of the GroEL ring, thereby capping the opening of the GroEL channel. This Clavibacter michiganensis subsp. michiganensis (strain NCPPB 382) protein is Co-chaperonin GroES.